Here is a 552-residue protein sequence, read N- to C-terminus: Acyl-CoA-dependent acyltransferase MAC1 (552 aa).

Belongs to the trichothecene O-acetyltransferase family.

It participates in secondary metabolite biosynthesis. Its function is as follows. Acyl-CoA-dependent acyltransferase; part of the gene cluster that mediates the biosynthesis of mannosylerythritol lipids (MELs), surface-active substances that enhance the availability of water-insoluble substrates. Depending on the number of acetyl groups, mannosylerythritol lipids can be differentiated into MEL A (fully acetylated), MEL B and MEL C (monoacetylated at R-6 and R-4, respectively), and the fully deacetylated MEL D. The first step in the pathway is the generation of mannosylerythritol by the glycosyltransferase EMT1 which catalyzes the transfer of GDP-mannose to the C-4 atom of meso-erythritol. This reaction has to be stereospecific, since only mannosyl-D-erythritol is generated. The produced disaccharide is subsequently acylated with fatty acids of various lengths by the acyltransferases MAC1 and MAC2 at positions C-2 and C-3, repectively. The existence of MEL derivatives which carry an acetyl group at C-2 implies that at least MAC1 also accepts acetyl-CoA as a donor. The final step of MEL biosynthesis is the acetylation of the fully acylated mannosylerythritol lipids catalyzed by the acetyl-CoA-dependent acetyltransferase MAT1. MAT1 displays a relaxed regioselectivity and is able to transfer acetylgroups to both positions C-4 and C-6 of the mannosyl moiety. This is Acyl-CoA-dependent acyltransferase MAC1 from Pseudozyma antarctica (strain T-34) (Yeast).